Here is a 258-residue protein sequence, read N- to C-terminus: Thiazole synthase (258 aa).

The active-site Schiff-base intermediate with DXP is K100. 1-deoxy-D-xylulose 5-phosphate is bound by residues G161, 187 to 188 (AG), and 209 to 210 (NT).

This sequence belongs to the ThiG family. As to quaternary structure, homotetramer. Forms heterodimers with either ThiH or ThiS.

It is found in the cytoplasm. The catalysed reaction is [ThiS sulfur-carrier protein]-C-terminal-Gly-aminoethanethioate + 2-iminoacetate + 1-deoxy-D-xylulose 5-phosphate = [ThiS sulfur-carrier protein]-C-terminal Gly-Gly + 2-[(2R,5Z)-2-carboxy-4-methylthiazol-5(2H)-ylidene]ethyl phosphate + 2 H2O + H(+). Its pathway is cofactor biosynthesis; thiamine diphosphate biosynthesis. Functionally, catalyzes the rearrangement of 1-deoxy-D-xylulose 5-phosphate (DXP) to produce the thiazole phosphate moiety of thiamine. Sulfur is provided by the thiocarboxylate moiety of the carrier protein ThiS. In vitro, sulfur can be provided by H(2)S. This chain is Thiazole synthase, found in Campylobacter jejuni subsp. jejuni serotype O:23/36 (strain 81-176).